A 69-amino-acid polypeptide reads, in one-letter code: uncharacterized protein (69 aa).

In terms of domain architecture, CHCH spans 6-56 (SEECTPAKKKYDACFNDWYANKFLKGDLHNRDCDELFAEYKSCLLKALKTK). 2 consecutive short sequence motifs (cx9C motif) follow at residues 9 to 19 (CTPAKKKYDAC) and 38 to 48 (CDELFAEYKSC). 2 cysteine pairs are disulfide-bonded: Cys9–Cys48 and Cys19–Cys38.

It belongs to the TRIAP1/MDM35 family.

This is an uncharacterized protein from Schizosaccharomyces pombe (strain 972 / ATCC 24843) (Fission yeast).